A 124-amino-acid polypeptide reads, in one-letter code: Secreted RxLR effector protein 49 (124 aa).

An N-terminal signal peptide occupies residues 1–22 (MIRRSPLVAVILFVAITHVVLA). Positions 57–60 (RSLR) match the RxLR motif.

The protein belongs to the RxLR effector family.

It localises to the secreted. The protein localises to the host cytoplasm. It is found in the host nucleus. Effector that acts as a broad suppressor of cell death to interrupt plant immunity. Inhibits cell death induced by cell death-inducing proteins, including the PAMP elicitor INF1 from P.infestans. The chain is Secreted RxLR effector protein 49 from Plasmopara viticola (Downy mildew of grapevine).